The sequence spans 197 residues: Probable NADPH:quinone oxidoreductase 1 (197 aa).

It belongs to the SsuE family. In terms of assembly, homotetramer. Requires FMN as cofactor.

It carries out the reaction a quinone + NADH + H(+) = a quinol + NAD(+). It catalyses the reaction a quinone + NADPH + H(+) = a quinol + NADP(+). Its function is as follows. The enzyme apparently serves as a quinone reductase in connection with conjugation reactions of hydroquinones involved in detoxification pathways. The polypeptide is Probable NADPH:quinone oxidoreductase 1 (Oryza sativa subsp. japonica (Rice)).